A 408-amino-acid chain; its full sequence is Methyltransferase/ribosomally synthesized type I borosin cyclic peptide precursor sveMA (408 aa).

Residues 1–250 (MASSTHPKRG…TSSTFYIPPR (250 aa)) form a methyltransferase domain region. Residues R73, Y77, and Y99 contribute to the active site. S-adenosyl-L-methionine is bound by residues Y99, H101, I104, A131, Q173, G211, S242, and T244. Residues 251-375 (DSEAIDYDMV…GSVYKVMSAT (125 aa)) form a clasp domain region. Positions 371-385 (VMSATQADIELGKEP) are precursor leader. V401 bears the N-methylvaline mark. Position 402 is an N-methylisoleucine (I402). Residue V406 is modified to N-methylvaline.

In the N-terminal section; belongs to the precorrin methyltransferase family. As to quaternary structure, homodimer. Post-translationally, sveMA automethylates at Val-401, Ile-402 and Val-406 before being processed by a prolyloligopeptidase which likely forms a peptidyl ester upon removal of the follower propeptide, which then undergoes macrocyclization with the N-terminus of the modified core peptide. Peptide backbone alpha-N-methylations change the physicochemical properties of amide bonds to provide structural constraints and other favorable characteristics including biological membrane permeability to peptides.

It participates in secondary metabolite biosynthesis. Functionally, fusion protein of the methyltransferase sveM and a type I borosin core peptide; part of the gene cluster that mediates the biosynthesis of a type I borosin, a highly methylated cyclic peptide with potent biological activities. Type I borosins derive from the C-terminus of the fusion protein, and it is the same protein that methylates its own C-terminus using S-adenosyl methionine (SAM). The C-terminus is subsequently cleaved off and macrocyclized by a prolyloligopeptidase to give the final product. The sequence is that of Methyltransferase/ribosomally synthesized type I borosin cyclic peptide precursor sveMA from Serendipita vermifera subsp. bescii (Mycorrhizal fungus).